We begin with the raw amino-acid sequence, 124 residues long: Competence protein ComGG (124 aa).

The signal sequence occupies residues 1–28 (MYRTRGFIYPAVLFVSALVLLIVNFVAA).

In terms of assembly, the transformation pili are flexible filaments, consisting mainly of the major pilin ComGC and smaller amounts of the minor pilins, including at least ComGD, ComGF and ComGG. Interacts with ComGC; the interaction is probably direct. Interacts with ComGD. Interacts with ComGF. May act as a link between ComGC, ComGD and ComGF. Homodimer; disulfide-linked. A minor fraction of ComGG is found as a disulfide-bonded homodimer. Partial processing of ComGG in competent cells requires ComC.

It localises to the cell membrane. The protein localises to the secreted. Required for formation of the type IV-like pilus (T4P) that plays a role in transformation. Transformation pili are dynamically extended and retracted, perhaps thereby promoting DNA uptake and transformation. Required for transformation and DNA binding. The sequence is that of Competence protein ComGG (comGG) from Bacillus subtilis (strain 168).